We begin with the raw amino-acid sequence, 273 residues long: Non-homologous end joining protein Ku (273 aa).

The Ku domain maps to 13–190 (KLSLVTCPVA…FTGIEKKSDA (178 aa)). The segment at 227 to 251 (KKKAKKPSKAKASKSTKGDDEEKSN) is disordered. Over residues 228 to 240 (KKAKKPSKAKASK) the composition is skewed to basic residues.

This sequence belongs to the prokaryotic Ku family. Homodimer. Interacts with LigD.

In terms of biological role, with LigD forms a non-homologous end joining (NHEJ) DNA repair enzyme, which repairs dsDNA breaks with reduced fidelity. Binds linear dsDNA with 5'- and 3'- overhangs but not closed circular dsDNA nor ssDNA. Recruits and stimulates the ligase activity of LigD. This chain is Non-homologous end joining protein Ku, found in Allorhizobium ampelinum (strain ATCC BAA-846 / DSM 112012 / S4) (Agrobacterium vitis (strain S4)).